The chain runs to 92 residues: PqqA binding protein (92 aa).

The protein belongs to the PqqD family. As to quaternary structure, monomer. Interacts with PqqE.

It participates in cofactor biosynthesis; pyrroloquinoline quinone biosynthesis. Its function is as follows. Functions as a PqqA binding protein and presents PqqA to PqqE, in the pyrroloquinoline quinone (PQQ) biosynthetic pathway. This Pseudomonas paraeruginosa (strain DSM 24068 / PA7) (Pseudomonas aeruginosa (strain PA7)) protein is PqqA binding protein.